The following is a 188-amino-acid chain: Apolipoprotein M (188 aa).

Residues 1–22 (MFHQIWAALLYFYGIILNSIYQ) constitute a signal peptide (not cleaved). Cystine bridges form between cysteine 23-cysteine 167, cysteine 95-cysteine 183, and cysteine 128-cysteine 157. Asparagine 135 carries an N-linked (GlcNAc...) asparagine glycan. Residues glutamate 136 and arginine 143 each contribute to the tetradecanoate site.

Belongs to the calycin superfamily. Lipocalin family. Highly divergent. In terms of assembly, interacts with LRP2; LRP2 mediates APOM renal uptake and subsequent lysosomal degradation.

It is found in the secreted. In terms of biological role, probably involved in lipid transport. Can bind sphingosine-1-phosphate, myristic acid, palmitic acid and stearic acid, retinol, all-trans-retinoic acid and 9-cis-retinoic acid. The sequence is that of Apolipoprotein M (APOM) from Pongo abelii (Sumatran orangutan).